Reading from the N-terminus, the 165-residue chain is Peptidyl-prolyl cis-trans isomerase NIMA-interacting 1 (165 aa).

Residues 5-39 (EKLPPGWEKRMSRSSGRVYYFNHITNASQWERPSG) enclose the WW domain. Positions 33 to 56 (QWERPSGGSTVGGSSKNGQGEPAK) are disordered. Lys-48 is modified (N6-acetyllysine). Residues 54-165 (PAKVRCSHLL…SGIHIILRTE (112 aa)) enclose the PpiC domain. 2 positions are modified to phosphoserine: Ser-73 and Ser-110.

As to quaternary structure, interacts with STIL. Interacts with KIF20B. Interacts with NEK6. Interacts (via WW domain) with PRKX. Interacts with BTK. Interacts (via PpiC domain) with DAPK1. Interacts with the phosphorylated form of RAF1. Interacts (via WW domain) with ATCAY; upon NGF stimulation. Interacts with PML. Interacts with BCL6. Interacts with FBXW7, disrupting FBXW7 dimerization and promoting FBXW7 autoubiquitination and degradation. Directly interacts with RBBP8/CtIP; this interaction depends upon RBBP8 phosphorylation. Interacts (via WW domain) with IRAK3/IRAK-M (when phosphorylated at 'Ser-110') in response to IL33-mediated (but not TLR4 ligand LPS) dendritic cell stimulation. Interacts with PGK1 (when phosphorylated at 'Ser-203'); the interaction is direct, occurs under hypoxic conditions, and targets PGK1 to the mitochondrion by promoting interactions with the TOM complex. Phosphorylation at Ser-73 by DAPK1 results in inhibition of its catalytic activity, nuclear localization, and its ability to induce centrosome amplification, chromosome instability and cell transformation. Ser-73 is dephosphorylated upon IL33-stimulation of dendritic cells. Expressed in dendritic cells (at protein level).

It localises to the nucleus. Its subcellular location is the nucleus speckle. The protein localises to the cytoplasm. It catalyses the reaction [protein]-peptidylproline (omega=180) = [protein]-peptidylproline (omega=0). Functionally, peptidyl-prolyl cis/trans isomerase (PPIase) that binds to and isomerizes specific phosphorylated Ser/Thr-Pro (pSer/Thr-Pro) motifs. By inducing conformational changes in a subset of phosphorylated proteins, acts as a molecular switch in multiple cellular processes. Displays a preference for an acidic residue N-terminal to the isomerized proline bond. Regulates mitosis presumably by interacting with NIMA and attenuating its mitosis-promoting activity. Down-regulates kinase activity of BTK. Can transactivate multiple oncogenes and induce centrosome amplification, chromosome instability and cell transformation. Required for the efficient dephosphorylation and recycling of RAF1 after mitogen activation. Binds and targets PML and BCL6 for degradation in a phosphorylation-dependent manner. Acts as a regulator of JNK cascade by binding to phosphorylated FBXW7, disrupting FBXW7 dimerization and promoting FBXW7 autoubiquitination and degradation: degradation of FBXW7 leads to subsequent stabilization of JUN. May facilitate the ubiquitination and proteasomal degradation of RBBP8/CtIP through CUL3/KLHL15 E3 ubiquitin-protein ligase complex, hence favors DNA double-strand repair through error-prone non-homologous end joining (NHEJ) over error-free, RBBP8-mediated homologous recombination (HR). Upon IL33-induced lung inflammation, catalyzes cis-trans isomerization of phosphorylated IRAK3/IRAK-M, inducing IRAK3 stabilization, nuclear translocation and expression of pro-inflammatory genes in dendritic cells. Catalyzes cis-trans isomerization of phosphorylated phosphoglycerate kinase PGK1 under hypoxic conditions to promote its binding to the TOM complex and targeting to the mitochondrion. The chain is Peptidyl-prolyl cis-trans isomerase NIMA-interacting 1 (Pin1) from Mus musculus (Mouse).